Consider the following 107-residue polypeptide: Anti-adapter protein IraM (107 aa).

This sequence belongs to the IraM/RssC family.

The protein localises to the cytoplasm. In terms of biological role, inhibits RpoS proteolysis by regulating RssB activity, thereby increasing the stability of the sigma stress factor RpoS during magnesium starvation. This is Anti-adapter protein IraM from Escherichia coli O7:K1 (strain IAI39 / ExPEC).